The chain runs to 27 residues: AnmTX Sco 9a-1 (27 aa).

At Pro-6 the chain carries Hydroxyproline. 2 disulfide bridges follow: Cys-7–Cys-18 and Cys-10–Cys-25.

In terms of biological role, has analgesic and anti-inflammatory activity in vivo. At a dose of 0.1 and 1 mg/kg, exhibits anti-inflammatory activity by reducing the volume of edema during 24 h better than the nonsteroidal anti-inflammatory drug, Diclofenac, at dose of 1 mg/kg in a mouse model of acute local lambda-carrageenan-induced inflammation. At a dose of 1 mg/kg, reduces the content of tumor necrosis factor-alpha (TNF-alpha). Demonstrates a significant analgesic effect on acute pain sensitivity in the carrageenan-induced thermal hyperalgesia model at doses of 0.1 and 1 mg/kg. Not toxic in mice, however stimulates exploratory motivation and active search behavior, and demonstrates an anti-anxiety effect. Does not exhibit any effect on currents of rat acid-sensing ion channels ASIC1a or ASIC3. The protein is AnmTX Sco 9a-1 of Stomphia coccinea (Spotted swimming anemone).